Here is a 215-residue protein sequence, read N- to C-terminus: Ras-like GTP-binding protein RHO1 (215 aa).

GTP contacts are provided by alanine 30, valine 31, glycine 32, lysine 33, threonine 34, and cysteine 35. Residue threonine 34 coordinates Mg(2+). 2 consecutive short sequence motifs (switch) follow at residues 43 to 54 and 74 to 93; these read GEIPTAYVPTVF and DTAG…ADSD. Threonine 52 serves as a coordination point for Mg(2+). The GTP site is built by aspartate 135 and serine 166. The segment at 194 to 215 is disordered; sequence VTTQAKSQESTQQKKKSKCLLQ. A compositionally biased stretch (low complexity) spans 195–204; sequence TTQAKSQEST. Residues 206–215 are compositionally biased toward basic residues; the sequence is QKKKSKCLLQ. Cysteine 212 carries the post-translational modification Cysteine methyl ester. A lipid anchor (S-geranylgeranyl cysteine) is attached at cysteine 212. Positions 213–215 are cleaved as a propeptide — removed in mature form; sequence LLQ.

It belongs to the small GTPase superfamily. Rho family. Interacts (GTP-bound form) with formin1 (via GBD/FH3 domain); the interaction activates formin1. Interacts (GTP-bound form) with profilin1. Interacts (GDP-bound form and when prenylated) with RhoGDI. It depends on Mg(2+) as a cofactor.

The protein localises to the cell membrane. It is found in the cytoplasm. The protein resides in the cytoskeleton. It localises to the cell projection. Its subcellular location is the phagocytic cup. The protein localises to the cytoplasmic vesicle. It is found in the phagosome. The catalysed reaction is GTP + H2O = GDP + phosphate + H(+). Regulated by guanine nucleotide exchange factors (GEFs) which promote the exchange of bound GDP for free GTP, GTPase activating proteins (GAPs) which increase the GTP hydrolysis activity and GDP dissociation inhibitors which inhibit the dissociation of the nucleotide from the GTPase. Its function is as follows. Small GTPase which cycles between active GTP-bound and inactive GDP-bound states. Involved in actin cytoskeleton remodeling. Regulates phagocytosis by modulating actin cytoskeleton dynamics through the recruitment of formin1 and profilin1 to the phagocytosis nucleation site. In Entamoeba histolytica (strain ATCC 30459 / HM-1:IMSS / ABRM), this protein is Ras-like GTP-binding protein RHO1.